Reading from the N-terminus, the 424-residue chain is Adenylosuccinate synthetase (424 aa).

GTP-binding positions include Gly12 to Lys18 and Gly40 to Thr42. Residue Asp13 is the Proton acceptor of the active site. Residues Asp13 and Gly40 each coordinate Mg(2+). IMP contacts are provided by residues Asp13–Lys16, Asn38–His41, Thr130, Arg144, Asn220, Thr235, and Arg299. His41 (proton donor) is an active-site residue. Substrate is bound at residue Val295–Arg301. GTP is bound by residues Arg301, Lys327–Asp329, and Gly412–Gly414.

It belongs to the adenylosuccinate synthetase family. Homodimer. It depends on Mg(2+) as a cofactor.

Its subcellular location is the cytoplasm. It carries out the reaction IMP + L-aspartate + GTP = N(6)-(1,2-dicarboxyethyl)-AMP + GDP + phosphate + 2 H(+). Its pathway is purine metabolism; AMP biosynthesis via de novo pathway; AMP from IMP: step 1/2. Plays an important role in the de novo pathway and in the salvage pathway of purine nucleotide biosynthesis. Catalyzes the first committed step in the biosynthesis of AMP from IMP. The sequence is that of Adenylosuccinate synthetase from Aspergillus clavatus (strain ATCC 1007 / CBS 513.65 / DSM 816 / NCTC 3887 / NRRL 1 / QM 1276 / 107).